We begin with the raw amino-acid sequence, 119 residues long: Large ribosomal subunit protein bL20 (119 aa).

It belongs to the bacterial ribosomal protein bL20 family.

Binds directly to 23S ribosomal RNA and is necessary for the in vitro assembly process of the 50S ribosomal subunit. It is not involved in the protein synthesizing functions of that subunit. The chain is Large ribosomal subunit protein bL20 from Acidithiobacillus ferrooxidans (strain ATCC 23270 / DSM 14882 / CIP 104768 / NCIMB 8455) (Ferrobacillus ferrooxidans (strain ATCC 23270)).